Here is a 506-residue protein sequence, read N- to C-terminus: Tubby protein homolog (506 aa).

Residues 36–244 (QKQKKKRQEP…PSPTAPEQPV (209 aa)) form a disordered region. Low complexity-rich tracts occupy residues 70-87 (LVES…QVQE) and 101-116 (PTAP…AATA). The span at 196–206 (FDEDEEDEEEN) shows a compositional bias: acidic residues. Composition is skewed to low complexity over residues 207-221 (SSSS…RPSS) and 230-243 (EAAS…PEQP).

Belongs to the TUB family. In terms of assembly, interacts with GNAQ. Interacts with TULP1.

Its subcellular location is the cytoplasm. It localises to the nucleus. It is found in the secreted. The protein localises to the cell membrane. Functionally, functions in signal transduction from heterotrimeric G protein-coupled receptors. Binds to membranes containing phosphatidylinositol 4,5-bisphosphate. Can bind DNA (in vitro). May contribute to the regulation of transcription in the nucleus. Could be involved in the hypothalamic regulation of body weight. Contribute to stimulation of phagocytosis of apoptotic retinal pigment epithelium (RPE) cells and macrophages. This chain is Tubby protein homolog (TUB), found in Homo sapiens (Human).